Reading from the N-terminus, the 376-residue chain is N-acetyldiaminopimelate deacetylase (376 aa).

Asp69 is an active-site residue. The Proton acceptor role is filled by Glu128.

It belongs to the peptidase M20A family. N-acetyldiaminopimelate deacetylase subfamily.

It carries out the reaction N-acetyl-(2S,6S)-2,6-diaminopimelate + H2O = (2S,6S)-2,6-diaminopimelate + acetate. It functions in the pathway amino-acid biosynthesis; L-lysine biosynthesis via DAP pathway; LL-2,6-diaminopimelate from (S)-tetrahydrodipicolinate (acetylase route): step 3/3. Its function is as follows. Catalyzes the conversion of N-acetyl-diaminopimelate to diaminopimelate and acetate. This Bacillus cereus (strain B4264) protein is N-acetyldiaminopimelate deacetylase.